The following is a 195-amino-acid chain: Protein lin-28 homolog A (195 aa).

A CSD domain is found at 33-106 (QGSGVCKWFN…GLESTRVTGP (74 aa)). The disordered stretch occupies residues 98-126 (LESTRVTGPGGAPCIGSERRPKVKGQQKR). The tract at residues 107 to 130 (GGAPCIGSERRPKVKGQQKRRQKG) is flexible linker. CCHC-type zinc fingers lie at residues 131–148 (DRCY…ECKL) and 153–170 (KKCH…QCPA). 8 residues coordinate Zn(2+): Cys-133, Cys-136, His-141, Cys-146, Cys-155, Cys-158, His-163, and Cys-168. The segment at 175–195 (AANLEEQPISEEQELIPETME) is disordered. Positions 182 to 195 (PISEEQELIPETME) are enriched in acidic residues.

The protein belongs to the lin-28 family. In terms of assembly, monomer.

The protein resides in the cytoplasm. Its subcellular location is the rough endoplasmic reticulum. It is found in the P-body. It localises to the stress granule. The protein localises to the nucleus. The protein resides in the nucleolus. Its function is as follows. RNA-binding protein that inhibits processing of pre-let-7 miRNAs and regulates translation of mRNAs that control developmental timing, pluripotency and metabolism. Seems to recognize a common structural G-quartet (G4) feature in its miRNA and mRNA targets. 'Translational enhancer' that drives specific mRNAs to polysomes and increases the efficiency of protein synthesis. Its association with the translational machinery and target mRNAs results in an increased number of initiation events per molecule of mRNA and, indirectly, in mRNA stabilization. Suppressor of microRNA (miRNA) biogenesis, including that of let-7. Binds specific target miRNA precursors (pre-miRNAs), recognizing an 5'-GGAG-3' motif found in their terminal loop, and recruits uridylyltransferase. This results in the terminal uridylation of target pre-miRNAs. Uridylated pre-miRNAs fail to be processed by Dicer and undergo degradation. Localized to the periendoplasmic reticulum area, binds to a large number of spliced mRNAs and inhibits the translation of mRNAs destined for the ER, reducing the synthesis of transmembrane proteins, ER or Golgi lumen proteins, and secretory proteins. Binds to and enhances the translation of mRNAs for several metabolic enzymes, increasing glycolysis and oxidative phosphorylation. Which, with the let-7 repression may enhance tissue repair in adult tissue. The sequence is that of Protein lin-28 homolog A (lin28a) from Xenopus tropicalis (Western clawed frog).